We begin with the raw amino-acid sequence, 337 residues long: Putative F-box protein At4g09870 (337 aa).

Residues 1–46 (MSISELSQDLLEEILCRVPAISLKKLRSTCKLWNSLFIDKRVRNEL) enclose the F-box domain.

This Arabidopsis thaliana (Mouse-ear cress) protein is Putative F-box protein At4g09870.